We begin with the raw amino-acid sequence, 94 residues long: Enhancer of yellow 2 transcription factor (94 aa).

It belongs to the ENY2 family. Component of the nuclear pore complex (NPC)-associated AMEX complex (anchoring and mRNA export complex), composed of at least e(y)2 and xmas-2. Component of the SAGA transcription coactivator-HAT complexes, at least composed of Ada2b, e(y)2, Pcaf/Gcn5, Taf10 and Nipped-A/Trrap. Within the SAGA complex, e(y)2, Sgf11, and not/nonstop form an additional subcomplex of SAGA called the DUB module (deubiquitination module). Component of the THO complex, composed of at least e(y)2, HPR1, THO2, THOC5, THOC6 and THOC7. Interacts with e(y)1. Interacts with su(Hw) (via zinc fingers). Interacts with xmas-2; required for localization to the nuclear periphery. Interacts with the nuclear pore complex (NPC).

The protein localises to the nucleus. Its subcellular location is the nucleoplasm. It is found in the cytoplasm. In terms of biological role, involved in mRNA export coupled transcription activation by association with both the AMEX and the SAGA complexes. The SAGA complex is a multiprotein complex that activates transcription by remodeling chromatin and mediating histone acetylation and deubiquitination. Within the SAGA complex, participates in a subcomplex that specifically deubiquitinates histone H2B. The SAGA complex is recruited to specific gene promoters by activators, where it is required for transcription. Required for nuclear receptor-mediated transactivation. Involved in transcription elongation by recruiting the THO complex onto nascent mRNA. The AMEX complex functions in docking export-competent ribonucleoprotein particles (mRNPs) to the nuclear entrance of the nuclear pore complex (nuclear basket). AMEX participates in mRNA export and accurate chromatin positioning in the nucleus by tethering genes to the nuclear periphery. This chain is Enhancer of yellow 2 transcription factor, found in Drosophila grimshawi (Hawaiian fruit fly).